We begin with the raw amino-acid sequence, 307 residues long: Probable GTP 3',8-cyclase (307 aa).

The 219-residue stretch at 4–222 folds into the Radical SAM core domain; that stretch reads ALGREVRSVR…RTFHSREVYR (219 aa). Arg-13 provides a ligand contact to GTP. [4Fe-4S] cluster-binding residues include Cys-20 and Cys-24. Tyr-26 contacts S-adenosyl-L-methionine. Position 27 (Cys-27) interacts with [4Fe-4S] cluster. Residue Lys-60 coordinates GTP. S-adenosyl-L-methionine contacts are provided by Gly-64 and Ser-112. Lys-150 is a binding site for GTP. Residues Cys-240 and Cys-243 each coordinate [4Fe-4S] cluster. 245–247 contributes to the GTP binding site; the sequence is RIR. Cys-257 is a [4Fe-4S] cluster binding site.

The protein belongs to the radical SAM superfamily. MoaA family. [4Fe-4S] cluster serves as cofactor.

It carries out the reaction GTP + AH2 + S-adenosyl-L-methionine = (8S)-3',8-cyclo-7,8-dihydroguanosine 5'-triphosphate + 5'-deoxyadenosine + L-methionine + A + H(+). It participates in cofactor biosynthesis; molybdopterin biosynthesis. Its function is as follows. Catalyzes the cyclization of GTP to (8S)-3',8-cyclo-7,8-dihydroguanosine 5'-triphosphate. The sequence is that of Probable GTP 3',8-cyclase from Methanopyrus kandleri (strain AV19 / DSM 6324 / JCM 9639 / NBRC 100938).